The following is a 257-amino-acid chain: MSYQQKFRLDGERAVVTGGGRAIGLCCTEALAEAGAAVVVIERSEADAEQALALRNRGYDVEVRVGDVTDAARMDAIATELADGGRPATILVNNAGIGQSGIPAQDLTDADWLRMMDVNLNGVFWCSRAFGRSMISMKRGAIVNLGSMSGTICNRPQPQTAYNVSKAAVHHLTRSLAAEWAHHGIRVNAVAPTYIETPMVVAVEANRERIPLWLADTPMARMGTPEEVASAVLFLASGAASLMTGAIVNVDAGFTCW.

Residues 21–23, 67–68, asparagine 94, tyrosine 162, and lysine 166 each bind NAD(+); these read RAI and DV. Tyrosine 162 serves as the catalytic Proton acceptor.

This sequence belongs to the short-chain dehydrogenases/reductases (SDR) family. As to quaternary structure, homotetramer. Requires Mg(2+) as cofactor.

The catalysed reaction is galactitol + NAD(+) = keto-D-tagatose + NADH + H(+). Its function is as follows. Catalyzes the oxidation of galactitol to D-tagatose. Also catalyzes the oxidation of a wide range of substrates, including polyvalent aliphatic alcohols and polyols, to the corresponding ketones and ketoses. Galactitol is the preferred substrate. The protein is Galactitol 2-dehydrogenase of Rhizobium johnstonii (strain DSM 114642 / LMG 32736 / 3841) (Rhizobium leguminosarum bv. viciae).